Consider the following 117-residue polypeptide: MHVKYLAGIVGAALLMAGCSSSNELSAAGQSVRIVDEQPGAECQLIGTATGKQSNWLSGQHGEEGGSMRGAANDLRNQAAAMGGNVIYGISSPSQGMLSSFVPTDSQIIGQVYKCPN.

An N-terminal signal peptide occupies residues 1 to 22 (MHVKYLAGIVGAALLMAGCSSS).

This is an uncharacterized protein from Escherichia coli O6:H1 (strain CFT073 / ATCC 700928 / UPEC).